Consider the following 513-residue polypeptide: ATP synthase subunit alpha (513 aa).

169 to 176 (GDRQTGKT) is an ATP binding site.

This sequence belongs to the ATPase alpha/beta chains family. As to quaternary structure, F-type ATPases have 2 components, CF(1) - the catalytic core - and CF(0) - the membrane proton channel. CF(1) has five subunits: alpha(3), beta(3), gamma(1), delta(1), epsilon(1). CF(0) has three main subunits: a(1), b(2) and c(9-12). The alpha and beta chains form an alternating ring which encloses part of the gamma chain. CF(1) is attached to CF(0) by a central stalk formed by the gamma and epsilon chains, while a peripheral stalk is formed by the delta and b chains.

It localises to the cell inner membrane. The catalysed reaction is ATP + H2O + 4 H(+)(in) = ADP + phosphate + 5 H(+)(out). Produces ATP from ADP in the presence of a proton gradient across the membrane. The alpha chain is a regulatory subunit. The chain is ATP synthase subunit alpha from Mannheimia succiniciproducens (strain KCTC 0769BP / MBEL55E).